A 588-amino-acid polypeptide reads, in one-letter code: Polyphenol oxidase II, chloroplastic (588 aa).

The segment covering 1–10 (MASFTTSPCT) has biased composition (polar residues). The tract at residues 1–32 (MASFTTSPCTSAAPKTPKSLSSSATISSPLPK) is disordered. The N-terminal 50 residues, 1-50 (MASFTTSPCTSAAPKTPKSLSSSATISSPLPKPSQIHIATAKRTHHFKVS), are a transit peptide targeting the chloroplast. Over residues 16 to 29 (TPKSLSSSATISSP) the composition is skewed to low complexity. The transit peptide at 51 to 88 (CNAPNGDSQPKLDRRDVLLGLGGLAGAASLINNPLAFA) directs the protein to the thylakoid. Intrachain disulfides connect cysteine 99-cysteine 116 and cysteine 115-cysteine 179. Residues histidine 178, histidine 199, histidine 208, histidine 330, histidine 334, and histidine 366 each coordinate Cu cation. Positions 182–199 (CNGGYVQTDYPDKEIQVH) form a cross-link, 2'-(S-cysteinyl)-histidine (Cys-His).

Belongs to the tyrosinase family. In terms of assembly, monomer. Requires Cu(2+) as cofactor.

The protein resides in the plastid. It is found in the chloroplast thylakoid lumen. It carries out the reaction 2 catechol + O2 = 2 1,2-benzoquinone + 2 H2O. Its function is as follows. Catalyzes the oxidation of mono- and o-diphenols to o-diquinones. This chain is Polyphenol oxidase II, chloroplastic (co-2), found in Ipomoea batatas (Sweet potato).